The primary structure comprises 89 residues: ATP synthase subunit H, mitochondrial (89 aa).

In terms of assembly, F-type ATP synthases have 2 components, the catalytic core F(1) and the membrane-embedded component F(0), linked together by a central stalk and a peripheral stalk. The central stalk, also called rotor shaft, is often seen as part of F(1). The peripheral stalk is seen as part of F(0). F(0) contains the membrane channel next to the rotor. F-type ATP synthases form dimers but each monomer functions independently in ATP generation. The dimer consists of 18 different polypeptides: ATP1 (subunit alpha, part of F(1), 3 molecules per monomer), ATP2 (subunit beta, part of F(1), 3 molecules per monomer), ATP3 (subunit gamma, part of the central stalk), ATP4 (subunit b, part of the peripheral stalk), ATP5/OSCP (subunit 5/OSCP, part of the peripheral stalk), ATP6 (subunit a, part of the peripheral stalk), ATP7 (subunit d, part of the peripheral stalk), ATP8 (subunit 8, part of the peripheral stalk), OLI1 (subunit c, part of the rotor, 10 molecules per monomer), ATP14 (subunit H, part of the peripheral stalk), ATP15 (subunit epsilon, part of the central stalk), ATP16 (subunit delta, part of the central stalk), ATP17 (subunit f, part of the peripheral stalk), ATP18 (subunit i/j, part of the peripheral stalk). Dimer-specific subunits are ATP19 (subunit k, at interface between monomers), ATP20 (subunit g, at interface between monomers), TIM11 (subunit e, at interface between monomers). Also contains subunit L.

The protein localises to the mitochondrion inner membrane. Its function is as follows. Mitochondrial membrane ATP synthase (F(1)F(0) ATP synthase or Complex V) produces ATP from ADP in the presence of a proton gradient across the membrane which is generated by electron transport complexes of the respiratory chain. F-type ATP synthases consist of two structural domains, F(1) - containing the extramembraneous catalytic core, and F(0) - containing the membrane proton channel, linked together by a central stalk and a peripheral stalk. During catalysis, ATP synthesis in the catalytic domain of F(1) is coupled via a rotary mechanism of the central stalk subunits to proton translocation. Part of the peripheral stalk. The chain is ATP synthase subunit H, mitochondrial from Pichia angusta (Yeast).